The chain runs to 236 residues: E3 ubiquitin-protein ligase RNF187 (236 aa).

An RING-type zinc finger spans residues C12–A53. Residues R98 and R109 each carry the asymmetric dimethylarginine; by PRMT1 modification. K195 participates in a covalent cross-link: Glycyl lysine isopeptide (Lys-Gly) (interchain with G-Cter in ubiquitin). Position 200 is a phosphoserine (S200). Residues K224 and K225 each participate in a glycyl lysine isopeptide (Lys-Gly) (interchain with G-Cter in ubiquitin) cross-link.

In terms of assembly, homodimer. Interacts with JUN, independently of JUN phosphorylation. Interacts (via C-terminus) with TRIM7. Ubiquitinated; undergoes 'Lys-48'-linked autoubiquitination in the absence of growth factors and MAP3K1-induced 'Lys-63'-linked polyubiquitination. 'Lys-48'-autoubiquitination leads to degradation by the proteasome, while MAP3K1-induced 'Lys-63'-linked polyubiquitination results in the stabilization of the protein. 'Lys-48'- and 'Lys-63'-linked polyubiquitinations occur most probably on the same 3 C-terminal lysine residues (Lys-195, Lys-224 and Lys-225) and are thus mutually exclusive. Other sites of ubiquitination are not excluded. 'Lys-63'-linked polyubiquitination by TRIM7 in response to growth factor signaling via the MEK/ERK pathway enhances protein stability. In terms of processing, arginine methylation by PRMT1 stabilizes RNF187 by facilitating K63-linked ubiquitin chain formation, and enables dimerization, c-Jun interaction and subsequent AP1 target gene expression.

The protein localises to the cytoplasm. It is found in the nucleus. The enzyme catalyses S-ubiquitinyl-[E2 ubiquitin-conjugating enzyme]-L-cysteine + [acceptor protein]-L-lysine = [E2 ubiquitin-conjugating enzyme]-L-cysteine + N(6)-ubiquitinyl-[acceptor protein]-L-lysine.. Its pathway is protein modification; protein ubiquitination. In terms of biological role, E3 ubiquitin-protein ligase that acts as a coactivator of JUN-mediated gene activation in response to growth factor signaling via the MAP3K1 pathway, independently from MAPK8. This chain is E3 ubiquitin-protein ligase RNF187 (Rnf187), found in Mus musculus (Mouse).